The sequence spans 379 residues: Glucose-1-phosphate adenylyltransferase (379 aa).

Alpha-D-glucose 1-phosphate is bound by residues glycine 164, glutamate 179 to lysine 180, and serine 190.

It belongs to the bacterial/plant glucose-1-phosphate adenylyltransferase family. In terms of assembly, homotetramer.

It catalyses the reaction alpha-D-glucose 1-phosphate + ATP + H(+) = ADP-alpha-D-glucose + diphosphate. It functions in the pathway glycan biosynthesis; glycogen biosynthesis. Functionally, involved in the biosynthesis of ADP-glucose, a building block required for the elongation reactions to produce glycogen. Catalyzes the reaction between ATP and alpha-D-glucose 1-phosphate (G1P) to produce pyrophosphate and ADP-Glc. This Streptococcus agalactiae serotype III (strain NEM316) protein is Glucose-1-phosphate adenylyltransferase.